We begin with the raw amino-acid sequence, 322 residues long: DNA repair and recombination protein RadA (322 aa).

105–112 (GMYGSGKT) contacts ATP.

This sequence belongs to the eukaryotic RecA-like protein family.

Involved in DNA repair and in homologous recombination. Binds and assemble on single-stranded DNA to form a nucleoprotein filament. Hydrolyzes ATP in a ssDNA-dependent manner and promotes DNA strand exchange between homologous DNA molecules. The protein is DNA repair and recombination protein RadA of Methanococcus maripaludis (strain C7 / ATCC BAA-1331).